The chain runs to 562 residues: DNA ligase (562 aa).

Residue Glu-252 participates in ATP binding. Lys-254 functions as the N6-AMP-lysine intermediate in the catalytic mechanism. ATP is bound by residues Arg-259, Arg-274, Glu-303, Phe-343, Arg-419, and Lys-425.

Belongs to the ATP-dependent DNA ligase family. The cofactor is Mg(2+).

The catalysed reaction is ATP + (deoxyribonucleotide)n-3'-hydroxyl + 5'-phospho-(deoxyribonucleotide)m = (deoxyribonucleotide)n+m + AMP + diphosphate.. In terms of biological role, DNA ligase that seals nicks in double-stranded DNA during DNA replication, DNA recombination and DNA repair. This is DNA ligase from Methanococcus aeolicus (strain ATCC BAA-1280 / DSM 17508 / OCM 812 / Nankai-3).